We begin with the raw amino-acid sequence, 383 residues long: Na(+)/H(+) antiporter NhaA (383 aa).

The next 11 membrane-spanning stretches (helical) occupy residues 10–30, 56–76, 91–111, 121–141, 150–170, 174–194, 206–226, 254–274, 289–308, 327–347, and 355–375; these read LIGG…NNSP, LMHW…GLEI, IITP…IYLS, GWAI…ALLG, LLVI…IAIF, SLSL…IICN, VVLG…ATLA, PWII…ISFS, IIWG…LAVF, GISL…VLAF, and AIKI…YIVL.

This sequence belongs to the NhaA Na(+)/H(+) (TC 2.A.33) antiporter family.

It localises to the cell inner membrane. It carries out the reaction Na(+)(in) + 2 H(+)(out) = Na(+)(out) + 2 H(+)(in). Na(+)/H(+) antiporter that extrudes sodium in exchange for external protons. The chain is Na(+)/H(+) antiporter NhaA from Francisella tularensis subsp. tularensis (strain WY96-3418).